The following is a 318-amino-acid chain: NADH-ubiquinone oxidoreductase chain 1 (318 aa).

8 helical membrane-spanning segments follow: residues 2 to 22 (FLMNLLLLIIPILVAMAFLTL), 68 to 88 (ISLFIIAPSLALTLAFTMWIP), 102 to 122 (ILFILATSSLAVYTILWSGWA), 146 to 166 (LAIILLSVLLLNGSFTLSSLI), 171 to 191 (FTWLLLPTWPLAMMWFISTLA), 217 to 237 (AGPFALFFMAEYTNIIMMNAL), 253 to 273 (EMFTFSFTLKTLMLTATFLWI), and 294 to 314 (LPLTLALCMWHISLPVIMACI).

This sequence belongs to the complex I subunit 1 family.

It localises to the mitochondrion inner membrane. It catalyses the reaction a ubiquinone + NADH + 5 H(+)(in) = a ubiquinol + NAD(+) + 4 H(+)(out). Functionally, core subunit of the mitochondrial membrane respiratory chain NADH dehydrogenase (Complex I) that is believed to belong to the minimal assembly required for catalysis. Complex I functions in the transfer of electrons from NADH to the respiratory chain. The immediate electron acceptor for the enzyme is believed to be ubiquinone. The polypeptide is NADH-ubiquinone oxidoreductase chain 1 (MT-ND1) (Tamias sibiricus (Siberian chipmunk)).